A 156-amino-acid polypeptide reads, in one-letter code: Cytochrome c-type biogenesis protein CcmE 1 (156 aa).

The Cytoplasmic portion of the chain corresponds to 1-8; that stretch reads MNATRKQR. Residues 9–29 form a helical; Signal-anchor for type II membrane protein membrane-spanning segment; that stretch reads LWLVIGVLTAAALAVTLIALA. The Periplasmic portion of the chain corresponds to 30–156; the sequence is LQRNMSYLFT…AAAAPLSGVR (127 aa). Heme-binding residues include His123 and Tyr127.

It belongs to the CcmE/CycJ family.

The protein resides in the cell inner membrane. In terms of biological role, heme chaperone required for the biogenesis of c-type cytochromes. Transiently binds heme delivered by CcmC and transfers the heme to apo-cytochromes in a process facilitated by CcmF and CcmH. The sequence is that of Cytochrome c-type biogenesis protein CcmE 1 from Xanthomonas campestris pv. campestris (strain 8004).